The primary structure comprises 225 residues: Lipoprotein-releasing system ATP-binding protein LolD (225 aa).

The region spanning 5–225 (LEVMDLTKGY…RLVDGRVVAD (221 aa)) is the ABC transporter domain. 41 to 48 (GASGTGKS) is a binding site for ATP.

This sequence belongs to the ABC transporter superfamily. Lipoprotein translocase (TC 3.A.1.125) family. As to quaternary structure, the complex is composed of two ATP-binding proteins (LolD) and two transmembrane proteins (LolC and LolE).

The protein localises to the cell inner membrane. Functionally, part of the ABC transporter complex LolCDE involved in the translocation of mature outer membrane-directed lipoproteins, from the inner membrane to the periplasmic chaperone, LolA. Responsible for the formation of the LolA-lipoprotein complex in an ATP-dependent manner. The chain is Lipoprotein-releasing system ATP-binding protein LolD from Geobacter metallireducens (strain ATCC 53774 / DSM 7210 / GS-15).